Here is a 434-residue protein sequence, read N- to C-terminus: 3-phosphoshikimate 1-carboxyvinyltransferase (434 aa).

3-phosphoshikimate contacts are provided by K22, S23, and R27. K22 is a phosphoenolpyruvate binding site. Residues G93 and R121 each contribute to the phosphoenolpyruvate site. 3-phosphoshikimate-binding residues include S168, S169, Q170, S199, D320, and K347. Q170 is a phosphoenolpyruvate binding site. Catalysis depends on D320, which acts as the Proton acceptor. Phosphoenolpyruvate contacts are provided by R351, R394, and K419.

The protein belongs to the EPSP synthase family. Monomer.

It localises to the cytoplasm. It carries out the reaction 3-phosphoshikimate + phosphoenolpyruvate = 5-O-(1-carboxyvinyl)-3-phosphoshikimate + phosphate. It functions in the pathway metabolic intermediate biosynthesis; chorismate biosynthesis; chorismate from D-erythrose 4-phosphate and phosphoenolpyruvate: step 6/7. In terms of biological role, catalyzes the transfer of the enolpyruvyl moiety of phosphoenolpyruvate (PEP) to the 5-hydroxyl of shikimate-3-phosphate (S3P) to produce enolpyruvyl shikimate-3-phosphate and inorganic phosphate. The protein is 3-phosphoshikimate 1-carboxyvinyltransferase of Burkholderia orbicola (strain MC0-3).